The following is an 86-amino-acid chain: Toxin Td2 (86 aa).

An N-terminal signal peptide occupies residues M1–C20. The LCN-type CS-alpha/beta domain maps to K21 to G83. Disulfide bonds link C31-C82, C35-C57, C43-C63, and C47-C65. Position 84 is an arginine amide (R84).

In terms of tissue distribution, expressed by the venom gland.

The protein localises to the secreted. Functionally, beta toxins bind voltage-independently at site-4 of sodium channels (Nav) and shift the voltage of activation toward more negative potentials thereby affecting sodium channel activation and promoting spontaneous and repetitive firing. This is Toxin Td2 from Tityus discrepans (Venezuelan scorpion).